The sequence spans 279 residues: Proteasome subunit beta (279 aa).

A propeptide spans 1–53 (removed in mature form; by autocatalysis); the sequence is MAAAFDPSGRLPDLFTSAGTSSFSAFLSMAAPELLPGRRPLPPGTAADLTPHA. Thr54 acts as the Nucleophile in catalysis.

It belongs to the peptidase T1B family. The 20S proteasome core is composed of 14 alpha and 14 beta subunits that assemble into four stacked heptameric rings, resulting in a barrel-shaped structure. The two inner rings, each composed of seven catalytic beta subunits, are sandwiched by two outer rings, each composed of seven alpha subunits. The catalytic chamber with the active sites is on the inside of the barrel. Has a gated structure, the ends of the cylinder being occluded by the N-termini of the alpha-subunits. Is capped by the proteasome-associated ATPase, ARC.

The protein resides in the cytoplasm. It catalyses the reaction Cleavage of peptide bonds with very broad specificity.. It functions in the pathway protein degradation; proteasomal Pup-dependent pathway. Its activity is regulated as follows. The formation of the proteasomal ATPase ARC-20S proteasome complex, likely via the docking of the C-termini of ARC into the intersubunit pockets in the alpha-rings, may trigger opening of the gate for substrate entry. Interconversion between the open-gate and close-gate conformations leads to a dynamic regulation of the 20S proteasome proteolysis activity. Functionally, component of the proteasome core, a large protease complex with broad specificity involved in protein degradation. The protein is Proteasome subunit beta of Salinispora arenicola (strain CNS-205).